Reading from the N-terminus, the 98-residue chain is Small ribosomal subunit protein bS6 (98 aa).

Belongs to the bacterial ribosomal protein bS6 family.

Functionally, binds together with bS18 to 16S ribosomal RNA. The protein is Small ribosomal subunit protein bS6 of Levilactobacillus brevis (strain ATCC 367 / BCRC 12310 / CIP 105137 / JCM 1170 / LMG 11437 / NCIMB 947 / NCTC 947) (Lactobacillus brevis).